A 641-amino-acid polypeptide reads, in one-letter code: Chaperone protein DnaK (641 aa).

Position 200 is a phosphothreonine; by autocatalysis (threonine 200). A compositionally biased stretch (low complexity) spans 602–611 (AASSKASAAS). The disordered stretch occupies residues 602-641 (AASSKASAASSPPPPPGAGGQKSDVIDAEFEKVDKDKPQA). Positions 630-641 (EFEKVDKDKPQA) are enriched in basic and acidic residues.

It belongs to the heat shock protein 70 family.

Its function is as follows. Acts as a chaperone. The sequence is that of Chaperone protein DnaK from Methylacidiphilum infernorum (isolate V4) (Methylokorus infernorum (strain V4)).